Reading from the N-terminus, the 224-residue chain is Ribose-5-phosphate isomerase A (224 aa).

Residues 32 to 35, 85 to 88, and 98 to 101 each bind substrate; these read TGST, DGAD, and KGGG. Catalysis depends on glutamate 107, which acts as the Proton acceptor. Substrate is bound at residue lysine 125.

It belongs to the ribose 5-phosphate isomerase family. As to quaternary structure, homodimer.

It carries out the reaction aldehydo-D-ribose 5-phosphate = D-ribulose 5-phosphate. The protein operates within carbohydrate degradation; pentose phosphate pathway; D-ribose 5-phosphate from D-ribulose 5-phosphate (non-oxidative stage): step 1/1. Its function is as follows. Catalyzes the reversible conversion of ribose-5-phosphate to ribulose 5-phosphate. The sequence is that of Ribose-5-phosphate isomerase A from Pseudomonas putida (strain W619).